The chain runs to 205 residues: tRNA (guanine-N(7)-)-methyltransferase (205 aa).

Residues Glu34, Glu59, Asp86, and Asp107 each coordinate S-adenosyl-L-methionine. Asp107 is a catalytic residue. Lys111 serves as a coordination point for substrate. Positions 113–118 are interaction with RNA; it reads RHEKRR. Substrate is bound by residues Asp144 and 182–185; that span reads TGYE.

Belongs to the class I-like SAM-binding methyltransferase superfamily. TrmB family.

It carries out the reaction guanosine(46) in tRNA + S-adenosyl-L-methionine = N(7)-methylguanosine(46) in tRNA + S-adenosyl-L-homocysteine. It functions in the pathway tRNA modification; N(7)-methylguanine-tRNA biosynthesis. Its function is as follows. Catalyzes the formation of N(7)-methylguanine at position 46 (m7G46) in tRNA. In Mycoplasmopsis synoviae (strain 53) (Mycoplasma synoviae), this protein is tRNA (guanine-N(7)-)-methyltransferase.